The primary structure comprises 605 residues: MLRQYKEQIKSSPQSCGVYKMVGDKNKVLYVGKAKNLKSRLSDYLQFENLSERIRVMLLQVIKVEIFITENEIEALLLEAQLIKSLKPLYNIVLKDGKFYPYITISKHDYPRIAKYRGKFKKNEFHYYGPFTSAAAVKQTILSLQKAFLLRVCSDQYFSSTKRPCIEYQIKRCSAPCINKITKDDYCQSVKQARNTLLGRNKEVKEQLLFTMRKCSSEENYELAAIYRDRVKFLEQIQIQHTDFSFEKDADFFSIVREEDLACISVLSFRNKDNYGSTPYFAENCGDHSNDEILSTFLVNFYNSANIPPIQIYVPDSIVDKEIIEQALYKVAQKPVKVLHAKNKKERDLLKFVYDNSQHSLEQKLIDYRNNLEKLEELSKIFLLPNIPKRIEVYDNSHISGSQQIGVMIVAGQEGFLKSEYRKFTIKEKFSGDDYKMMREVLTRRFSGNIKGIIPDFLLIDGGPGHVSIVQNVLEVLNINVPFACMAKGPDRNAGNERFYMLGREEFSLANDSKVMLYLQSLRNEAHRFAITSHRKKRDKQFIVSQLSKIPGIGNKRKKALMSYFGSVKNISRASLAEIQNVPGISKGLAEVILKYVNYKRGVLE.

One can recognise a GIY-YIG domain in the interval Gln14–Ile92. Residues Lys202–Ile237 enclose the UVR domain.

Belongs to the UvrC family. As to quaternary structure, interacts with UvrB in an incision complex.

The protein resides in the cytoplasm. The UvrABC repair system catalyzes the recognition and processing of DNA lesions. UvrC both incises the 5' and 3' sides of the lesion. The N-terminal half is responsible for the 3' incision and the C-terminal half is responsible for the 5' incision. The sequence is that of UvrABC system protein C from Wolbachia pipientis wMel.